The primary structure comprises 234 residues: Probable pectate lyase F (234 aa).

The first 17 residues, 1 to 17, serve as a signal peptide directing secretion; it reads MWSSIAAFPVLVPVALA.

This sequence belongs to the polysaccharide lyase 3 family. Requires Ca(2+) as cofactor.

The protein resides in the secreted. The enzyme catalyses Eliminative cleavage of (1-&gt;4)-alpha-D-galacturonan to give oligosaccharides with 4-deoxy-alpha-D-galact-4-enuronosyl groups at their non-reducing ends.. Its function is as follows. Pectinolytic enzyme consist of four classes of enzymes: pectin lyase, polygalacturonase, pectin methylesterase and rhamnogalacturonase. Among pectinolytic enzymes, pectin lyase is the most important in depolymerization of pectin, since it cleaves internal glycosidic bonds of highly methylated pectins. Favors pectate, the anion, over pectin, the methyl ester. The sequence is that of Probable pectate lyase F (plyF) from Aspergillus fumigatus (strain ATCC MYA-4609 / CBS 101355 / FGSC A1100 / Af293) (Neosartorya fumigata).